A 57-amino-acid polypeptide reads, in one-letter code: Large ribosomal subunit protein bL32 (57 aa).

Residues 1 to 19 are compositionally biased toward basic residues; sequence MATPKRRMSRANTRSRRSQ. Residues 1 to 20 are disordered; it reads MATPKRRMSRANTRSRRSQW.

The protein belongs to the bacterial ribosomal protein bL32 family.

This is Large ribosomal subunit protein bL32 from Mycobacterium marinum (strain ATCC BAA-535 / M).